A 289-amino-acid polypeptide reads, in one-letter code: uncharacterized protein (289 aa).

Residues 2-62 (NEKKERIIKT…SACEYYIGMS (61 aa)) enclose the HTH tetR-type domain. Residues 25-44 (TIQEIASECGISKGAFYLHF) constitute a DNA-binding region (H-T-H motif).

This is an uncharacterized protein from Bacillus subtilis (strain 168).